The chain runs to 101 residues: NADH-quinone oxidoreductase subunit K (101 aa).

3 consecutive transmembrane segments (helical) span residues 4–24, 29–49, and 65–85; these read LSHYLTVAAILFTLGVLGIFI, IIVILMSVELILLAVNINLVA, and FVLTVAAAEAAIGLAILVVFF.

The protein belongs to the complex I subunit 4L family. As to quaternary structure, NDH-1 is composed of 14 different subunits. Subunits NuoA, H, J, K, L, M, N constitute the membrane sector of the complex.

It localises to the cell inner membrane. The catalysed reaction is a quinone + NADH + 5 H(+)(in) = a quinol + NAD(+) + 4 H(+)(out). NDH-1 shuttles electrons from NADH, via FMN and iron-sulfur (Fe-S) centers, to quinones in the respiratory chain. The immediate electron acceptor for the enzyme in this species is believed to be ubiquinone. Couples the redox reaction to proton translocation (for every two electrons transferred, four hydrogen ions are translocated across the cytoplasmic membrane), and thus conserves the redox energy in a proton gradient. This is NADH-quinone oxidoreductase subunit K from Methylobacterium nodulans (strain LMG 21967 / CNCM I-2342 / ORS 2060).